The primary structure comprises 130 residues: Small ribosomal subunit protein uS9 (130 aa).

This sequence belongs to the universal ribosomal protein uS9 family.

This is Small ribosomal subunit protein uS9 from Phytoplasma australiense.